The sequence spans 1224 residues: MSPNPLQKPAIDAAPAPFADFAPPVRPQSTLRRAITAAYRRPETECLPPLVEAATQSKEIRDAAASTARKLIEALRGKHSGSGVEGLVQEYSLSSQEGVALMCLAERPVRIPDTATRDALIRDKIADGNWKSHLGRSRSLFVNAATWGLVVTGKLTSTVNDRTLAARVTRLISRCGEPVIRRGVDMAMRMMGEQFVTGETIEALKRSKELEEKGFSYSYDMLRERPTAADAERYYRDYESAIHATAKPRGRGIYEGPGISIKLSALHPRYRQAARVMGELLPRVKALALLAKNYDIGLNIDAEEADRLELSLDLLEVLCLDGDLSGWNGMGFVVQAYGKRCPFVLDFIIDLARRSGRRIMVRLVKGAYWDAEIKRAQLDGLADFPVFTRKIHTDVSYMPRTQAACRDRCGVPQFATHNAQTLAAIYHMAGKDFHVGKYEFQCLHGMGEPLYEEVVGRGKLDRPCRIYAPVGTHETLLAYLVRRLLENGANSSFVHRINDPKVSIDELIADPVEVVRAMPVVGAKHDRIALPAVLFGDARTNSAGFDLSNEETLASLTEALRESAAMKWTALPQFATGPAAGETRTVLNPGDHRDVVGSVTETRKRTHGAPCACRRRGAGLGGRLAERAACLDRAAELMQARMPTLLGLIIREAGKSALNAIAEVREAIDFLRYYAEQTRRTLGPATPLGPIVCISPWNFPLAIFTGQIAAALVAGNPVLAKPAEETPLIAAEGVRILREAGIPASALQLLPGDGRVGAALVAGRDAGVMFTGSTEVARLIQAQLADRLSPAGRPVPLIAETGGQNAMIVDSSALAGQVVGDVITSAFDSAGQRCSALRVLCLQEDVAGPHPDDAEGRAARHCISAAPIVFSVDVGPVITSEAKDNIEKHIERMRGLGRKVEQIGLASETGVGTFVPPTIIELEKLSDLQREVFGPVLHVIRYRRDDLDRLVDDVNATGYGLTFGLHTRLDETIAHVTSRIKAGNLYINRNIIGAVVGVQPFGGRGLSGTGPKAGGPLYLGRLVTTAPVPPQHSSVHTDPVLLDFAKWLDGKGARAEVEAARNAGSSSALGLDLELPGPVGERNLYTLHARGRILLVPATESGLYHQLAAALATGNSVAIDAASGLQASLKNLPQTVGLRVSWSKDWAADGPFAGALVEGDAERIRAVNKAIAALPGPLLLVQAASSGEIARNPDAYCLNWLVEEVSASINTAAAGGNASLMAIG.

The interval 1–25 (MSPNPLQKPAIDAAPAPFADFAPPV) is disordered. The span at 9–23 (PAIDAAPAPFADFAP) shows a compositional bias: low complexity. Residues 164-501 (LAARVTRLIS…SFVHRINDPK (338 aa)) are proline dehydrogenase. The interval 576 to 1032 (TGPAAGETRT…VTTAPVPPQH (457 aa)) is aldehyde dehydrogenase. Active-site residues include glutamate 800 and cysteine 834.

This sequence in the N-terminal section; belongs to the proline dehydrogenase family. The protein in the C-terminal section; belongs to the aldehyde dehydrogenase family. It depends on FAD as a cofactor.

The enzyme catalyses L-proline + a quinone = (S)-1-pyrroline-5-carboxylate + a quinol + H(+). It carries out the reaction L-glutamate 5-semialdehyde + NAD(+) + H2O = L-glutamate + NADH + 2 H(+). It participates in amino-acid degradation; L-proline degradation into L-glutamate; L-glutamate from L-proline: step 1/2. It functions in the pathway amino-acid degradation; L-proline degradation into L-glutamate; L-glutamate from L-proline: step 2/2. Functionally, oxidizes proline to glutamate for use as a carbon and nitrogen source, and also functions as a transcriptional repressor of its own gene. The sequence is that of Bifunctional protein PutA (putA) from Rhizobium meliloti (Ensifer meliloti).